The chain runs to 374 residues: Glutamate 5-kinase (374 aa).

Lys16 serves as a coordination point for ATP. Substrate-binding residues include Ser56, Asp143, and Asn155. Residue 175–176 (TD) coordinates ATP. The PUA domain maps to 282–360 (RGRVVLDAGA…SEIEAVLGYV (79 aa)).

It belongs to the glutamate 5-kinase family.

The protein localises to the cytoplasm. The enzyme catalyses L-glutamate + ATP = L-glutamyl 5-phosphate + ADP. The protein operates within amino-acid biosynthesis; L-proline biosynthesis; L-glutamate 5-semialdehyde from L-glutamate: step 1/2. Catalyzes the transfer of a phosphate group to glutamate to form L-glutamate 5-phosphate. This Ralstonia nicotianae (strain ATCC BAA-1114 / GMI1000) (Ralstonia solanacearum) protein is Glutamate 5-kinase.